A 190-amino-acid chain; its full sequence is CASP-like protein 1E2 (190 aa).

Residues 1-21 (MEHEGKNNMNGMEMEKGKREL) form a disordered region. At 1–28 (MEHEGKNNMNGMEMEKGKRELGSRKGVE) the chain is on the cytoplasmic side. The helical transmembrane segment at 29-49 (LTMRVLALILTMAAATVLGVA) threads the bilayer. Over 50-83 (KQTKVVSIKLIPTLPPLDITTTAKASYLSAFVYN) the chain is Extracellular. A helical membrane pass occupies residues 84 to 104 (ISVNAIACGYTAISIAILMIS). Residues 105–111 (RGRRSKK) are Cytoplasmic-facing. A helical transmembrane segment spans residues 112-132 (LLMVVLLGDLVMVALLFSGTG). Over 133-163 (AASAIGLMGLHGNKHVMWKKVCGVFGKFCHR) the chain is Extracellular. A helical membrane pass occupies residues 164–184 (AAPSLPLTLLAAVVFMFLVVL). The Cytoplasmic portion of the chain corresponds to 185–190 (DAIKLP).

It belongs to the Casparian strip membrane proteins (CASP) family. In terms of assembly, homodimer and heterodimers.

It localises to the cell membrane. The protein is CASP-like protein 1E2 of Arabidopsis thaliana (Mouse-ear cress).